The sequence spans 493 residues: Stage V sporulation protein AF (493 aa).

5 consecutive transmembrane segments (helical) span residues 296–316, 334–354, 363–383, 387–407, and 418–438; these read FFGILASTLFLPIWFLFVLQP, IPIILQIFLADLGIEFLRMAA, TAMGLIAAVLIGQIAIEVGLF, VILYVSLAAIGTFTTPSYELS, and MILVALFHIKGLVIGFTVLII.

This sequence belongs to the GerABKA family.

The protein localises to the cell membrane. In Bacillus subtilis (strain 168), this protein is Stage V sporulation protein AF (spoVAF).